A 175-amino-acid polypeptide reads, in one-letter code: MGKVLSKIFGNKEMRILMLGLDAAGKTTILYKLKLGQSVTTIPTVGFNVETVTYKNVKFNVWDVGGQDKIRPLWRHYYTGTQGLIFVVDCADRDRIDEARQELHRIINDREMRDAIILIFANKQDLPDAMKPHEIQEKLGLTRIRDRNWYVQPSCATSGDGLYEGLTWLTSNYKS.

Gly2 carries the N-myristoyl glycine lipid modification. A lipid anchor (N6-myristoyl lysine) is attached at Lys3. Residues Ala23 to Thr28, Thr41 to Thr44, Asp63 to Gln67, Asn122 to Asp125, and Cys155 to Ala156 contribute to the GTP site.

This sequence belongs to the small GTPase superfamily. Arf family. In terms of assembly, interacts (when activated) with GGA1, GGA2 and GGA3; the interaction is required for proper subcellular location of GGA1, GGA2 and GGA3. Interacts with PIP5K1C. Interacts with USP6 (via Rab-GAP TBC domain). Interacts with RAB11FIP3 and RAB11FIP4. Interacts with HERC1. Interacts with ARHGAP21. Interacts with ASAP3; the interaction is stabilized by calcium ions. Interacts with NCS1/FREQ at the plasma membrane. Interacts with TBC1D24. Interacts with ECPAS. Interacts with MICALL1. Interacts with SPAG9 homodimers, forming heterotetramers. Interacts with CYTH3. Interacts with ASAP2. Interacts with UACA. Interacts with KIF23, forming heterodimers and heterotetramers. Interacts with C9orf72. Interacts (GTP-bound form) with TJAP1/PILT. Interacts with PRKAA2. Interacts with CD36 (when palmitoylated); this interaction mediates CD36 transport from the Golgi to the plasma membrane. Interacts with APBB1. As to quaternary structure, (Microbial infection) Interacts with the V.cholerae enterotoxin subunit A1; this causes a conformation change so that the toxin can bind NAD and catalyze the ADP-ribosylation of Gs alpha. (Microbial infection) Interacts with EspG from enteropathogenic E.coli. In terms of assembly, (Microbial infection) Identified in a complex with RAB1A and EspG from enteropathogenic E.coli. As to quaternary structure, (Microbial infection) Interacts with human enterovirus 71 protein VP1. Post-translationally, GTP-bound form is myristoylated on Lys-3 by NMT1 and NMT2, allowing ARF6 to remain on membranes during the GTPase cycle, thereby promoting its activity. GDP-bound inactive form is demyristoylated on Lys-3 by SIRT2 at early endosomes or endocytic recycling compartment to allow its efficient activation by a guanine exchange factor (GEF) after GDP release. Ubiquitous, with higher levels in heart, substantia nigra, and kidney.

The protein resides in the cytoplasm. It localises to the cytosol. The protein localises to the cell membrane. Its subcellular location is the endosome membrane. It is found in the recycling endosome membrane. The protein resides in the cell projection. It localises to the filopodium membrane. The protein localises to the ruffle. Its subcellular location is the cleavage furrow. It is found in the midbody. The protein resides in the midbody ring. It localises to the early endosome membrane. The protein localises to the golgi apparatus. Its subcellular location is the trans-Golgi network membrane. The enzyme catalyses GTP + H2O = GDP + phosphate + H(+). Activation is generally mediated by a guanine exchange factor (GEF), while inactivation through hydrolysis of bound GTP is catalyzed by a GTPase activating protein (GAP). Activated by ASAP3. Inactivated by ACAP1 and ACAP2. Activated by NGF via NTRK1. Activated by PRKAA2 through its C-terminal regulatory domain. GTP-binding protein involved in protein trafficking that regulates endocytic recycling and cytoskeleton remodeling. GTP-bound form plays an important role in the transport of multiple palmitoylated proteins form the Golgi to the plasma membrane. Required for normal completion of mitotic cytokinesis. Plays a role in the reorganization of the actin cytoskeleton and the formation of stress fibers. Involved in the regulation of dendritic spine development, contributing to the regulation of dendritic branching and filopodia extension. Potentiates the neurite outgrowth in primary neurons by interacting with the molecular adapter APBB1. Plays an important role in membrane trafficking, during junctional remodeling and epithelial polarization. Regulates surface levels of adherens junction proteins such as CDH1. Required for NTRK1 sorting to the recycling pathway from early endosomes. Its function is as follows. (Microbial infection) Functions as an allosteric activator of the cholera toxin catalytic subunit, an ADP-ribosyltransferase. Functionally, (Microbial infection) Plays a key role in the endocytosis of enterovirus 71 and thus viral entry into brain microvascular endothelial cells. In Homo sapiens (Human), this protein is ADP-ribosylation factor 6.